Reading from the N-terminus, the 379-residue chain is DNA replication and repair protein RecF (379 aa).

30-37 (GKNAQGKT) contributes to the ATP binding site.

Belongs to the RecF family.

The protein resides in the cytoplasm. Its function is as follows. The RecF protein is involved in DNA metabolism; it is required for DNA replication and normal SOS inducibility. RecF binds preferentially to single-stranded, linear DNA. It also seems to bind ATP. This Ligilactobacillus salivarius (strain UCC118) (Lactobacillus salivarius) protein is DNA replication and repair protein RecF.